Reading from the N-terminus, the 365-residue chain is Phosphate acyltransferase (365 aa).

This sequence belongs to the PlsX family. As to quaternary structure, homodimer. Probably interacts with PlsY.

Its subcellular location is the cytoplasm. It catalyses the reaction a fatty acyl-[ACP] + phosphate = an acyl phosphate + holo-[ACP]. It functions in the pathway lipid metabolism; phospholipid metabolism. In terms of biological role, catalyzes the reversible formation of acyl-phosphate (acyl-PO(4)) from acyl-[acyl-carrier-protein] (acyl-ACP). This enzyme utilizes acyl-ACP as fatty acyl donor, but not acyl-CoA. The chain is Phosphate acyltransferase from Jannaschia sp. (strain CCS1).